Here is a 282-residue protein sequence, read N- to C-terminus: Elongation factor Ts (282 aa).

The segment at 79 to 82 (TDFV) is involved in Mg(2+) ion dislocation from EF-Tu.

The protein belongs to the EF-Ts family.

Its subcellular location is the cytoplasm. Associates with the EF-Tu.GDP complex and induces the exchange of GDP to GTP. It remains bound to the aminoacyl-tRNA.EF-Tu.GTP complex up to the GTP hydrolysis stage on the ribosome. This Colwellia psychrerythraea (strain 34H / ATCC BAA-681) (Vibrio psychroerythus) protein is Elongation factor Ts.